Here is a 296-residue protein sequence, read N- to C-terminus: MTTLENPEMQAQLLSAALPYMQRYENKHVVVKYGGHAMGNPELGKAFARDVALLKQSGVNPIVVHGGGPQIQAMLTKLGIESRFEGGLRVTDEKTVEVVEMVLAGSINKEIVALINAEGEWAIGLCGKDGNMVFAQKAHKTVIDPDSNIEKVLDLGFVGEPAEVDRTLLDLLARSEMIPVIAPVAPGRDGHTYNINADTFAGAIAGALAATRLLFLTDVPGVLDKDKKLIKELSVADAQALIRDGTISGGMIPKVETCIDAIRRGVEGVVILNGKTPHSVLLELFTEHGAGTLIVP.

Substrate-binding positions include 67–68 (GG), arginine 89, and asparagine 194.

This sequence belongs to the acetylglutamate kinase family. ArgB subfamily.

Its subcellular location is the cytoplasm. It carries out the reaction N-acetyl-L-glutamate + ATP = N-acetyl-L-glutamyl 5-phosphate + ADP. Its pathway is amino-acid biosynthesis; L-arginine biosynthesis; N(2)-acetyl-L-ornithine from L-glutamate: step 2/4. Functionally, catalyzes the ATP-dependent phosphorylation of N-acetyl-L-glutamate. The sequence is that of Acetylglutamate kinase from Brucella canis (strain ATCC 23365 / NCTC 10854 / RM-666).